The sequence spans 222 residues: Elongation factor 1-beta' (222 aa).

The disordered stretch occupies residues 71–113 (SQGTSPLTAGAKPTAPAPAAKDDDDDDVDLFGSGDEEEDAEAE). The segment covering 78–89 (TAGAKPTAPAPA) has biased composition (low complexity). Positions 92-111 (DDDDDDVDLFGSGDEEEDAE) are enriched in acidic residues.

It belongs to the EF-1-beta/EF-1-delta family. EF-1 is composed of 4 subunits: alpha, beta, beta' and gamma. Post-translationally, phosphorylated.

In terms of biological role, EF-1-beta and EF-1-beta' stimulate the exchange of GDP bound to EF-1-alpha to GTP. In Bombyx mori (Silk moth), this protein is Elongation factor 1-beta'.